The chain runs to 276 residues: MADADAQRQAEEDANLQLPPYPHPPPFYLKFTTENKDRLDEIKKEDGIDTASDGGKSAQLSTEQILALPTELRYLIPPEPPADTEEFNVFGTINQLKDRDTFNGTMEYISQALAKLLPDWKYEQLYPTTDASNSASSTLDRQRYLFRFLRSILVAYIELLGIVAINPTDELKDDKLKDILTMVTNMHALINEYRPHQARETLISEMERQVEKKKMEIQGVRKMKERVGEVLEGFGREIPSEKAEDRTEEAAVTSEEERKRDAQRQMWQAMDEMLSQ.

Composition is skewed to basic and acidic residues over residues 1–11 (MADADAQRQAE) and 234–263 (FGRE…RDAQ). 2 disordered regions span residues 1–27 (MADA…PPPF) and 234–276 (FGRE…MLSQ).

This sequence belongs to the Mediator complex subunit 7 family. As to quaternary structure, component of the Mediator complex.

It localises to the nucleus. In terms of biological role, component of the Mediator complex, a coactivator involved in the regulated transcription of nearly all RNA polymerase II-dependent genes. Mediator functions as a bridge to convey information from gene-specific regulatory proteins to the basal RNA polymerase II transcription machinery. Mediator is recruited to promoters by direct interactions with regulatory proteins and serves as a scaffold for the assembly of a functional preinitiation complex with RNA polymerase II and the general transcription factors. This Phaeosphaeria nodorum (strain SN15 / ATCC MYA-4574 / FGSC 10173) (Glume blotch fungus) protein is Mediator of RNA polymerase II transcription subunit 7 (MED7).